Here is a 257-residue protein sequence, read N- to C-terminus: G2/mitotic-specific cyclin S13-7 (257 aa).

It belongs to the cyclin family. Cyclin AB subfamily. Interacts with the CDC2 protein kinase to form a serine/threonine kinase holoenzyme complex also known as maturation promoting factor (MPF). The cyclin subunit imparts substrate specificity to the complex.

Functionally, essential for the control of the cell cycle at the G2/M (mitosis) transition. In Glycine max (Soybean), this protein is G2/mitotic-specific cyclin S13-7.